The chain runs to 933 residues: Clumping factor A (933 aa).

The first 39 residues, 1–39, serve as a signal peptide directing secretion; that stretch reads MNMKKKEKHAIRKKSIGVASVLVGTLIGFGLLSSKEADA. A YSIRK-G/S signaling motif motif is present at residues 9–20; the sequence is HAIRKKSIGVAS. 2 disordered regions span residues 34 to 200 and 529 to 904; these read SKEA…SNKD and FNNG…SEDE. Residues 40–542 form a ligand binding A region region; it reads SENSVTQSDS…SGSGDGIDKP (503 aa). Over residues 47–65 the composition is skewed to low complexity; the sequence is SDSASNESKSNDSSSVSAA. A compositionally biased stretch (polar residues) spans 71–105; it reads TNVSDTKTSSNTNNGETSVAQNPAQQETTQSSSTN. The span at 106-132 shows a compositional bias: low complexity; it reads ATTEETPVTGEATTTTTNQANTPATTQ. Over residues 133 to 200 the composition is skewed to polar residues; it reads SSNTNAEELV…PQSTDASNKD (68 aa). Residues 547–565 are compositionally biased toward acidic residues; sequence QPDEPGEIEPIPEDSDSDP. Positions 566–598 are enriched in low complexity; it reads GSDSGSDSNSDSGSDSGSDSTSDSGSDSASDSD. Acidic residues predominate over residues 599-861; sequence SASDSDSASD…DSDSESDSNS (263 aa). Positions 862-880 are enriched in low complexity; sequence DSESGSNNNVVPPNSPKNG. Over residues 887–896 the composition is skewed to basic and acidic residues; that stretch reads NEAKDSKEPL. The short motif at 896 to 900 is the LPXTG sorting signal element; it reads LPDTG. Thr-899 is modified (pentaglycyl murein peptidoglycan amidated threonine). Positions 900–933 are cleaved as a propeptide — removed by sortase; it reads GSEDEANTSLIWGLLASIGSLLLFRRKKENKDKK.

This sequence belongs to the serine-aspartate repeat-containing protein (SDr) family.

It is found in the secreted. The protein localises to the cell wall. Its function is as follows. Cell surface-associated protein implicated in virulence. Promotes bacterial attachment exclusively to the gamma-chain of human fibrinogen. Induces formation of bacterial clumps, which diminish the ability of group IIA phospholipase A2 to cause bacterial phospholipid hydrolysis and killing. Significantly decreases macrophage phagocytosis possibly thanks to the clumps, clumped bacteria being too large to be phagocytosed. Dominant factor responsible for human platelet aggregation, which may be an important mechanism for initiating infective endocarditis. Enhances spleen cell proliferative response in vitro, contributing significantly to the immunostimulatory activity of S.aureus. This is Clumping factor A (clfA) from Staphylococcus aureus (strain Newman).